Consider the following 426-residue polypeptide: 6-Hydroxy-7-prenyldeoxybrevianamide E synthase notC' (426 aa).

Glu94 serves as a coordination point for substrate. Residues Arg105, Lys191, and Tyr193 each contribute to the dimethylallyl diphosphate site. Substrate is bound at residue Tyr195. The dimethylallyl diphosphate site is built by Lys267, Tyr269, Gln352, Tyr354, Tyr418, and Tyr422.

It belongs to the tryptophan dimethylallyltransferase family.

The catalysed reaction is 6-hydroxydeoxybrevianamide E + dimethylallyl diphosphate = notoamide S + diphosphate. It functions in the pathway alkaloid biosynthesis. In terms of biological role, prenyltransferase; part of the gene cluster that mediates the biosynthesis of notoamide, a fungal indole alkaloid that belongs to a family of natural products containing a characteristic bicyclo[2.2.2]diazaoctane core. The first step of notoamide biosynthesis involves coupling of L-proline and L-tryptophan by the bimodular NRPS notE', to produce cyclo-L-tryptophan-L-proline called brevianamide F. The reverse prenyltransferase notF' then acts as a deoxybrevianamide E synthase and converts brevianamide F to deoxybrevianamide E via reverse prenylation at C-2 of the indole ring leading to the bicyclo[2.2.2]diazaoctane core. Deoxybrevianamide E is further hydroxylated at C-6 of the indole ring, likely catalyzed by the cytochrome P450 monooxygenase notG', to yield 6-hydroxy-deoxybrevianamide E. 6-hydroxy-deoxybrevianamide E is a specific substrate of the prenyltransferase notC' for normal prenylation at C-7 to produce 6-hydroxy-7-prenyl-deoxybrevianamide, also called notoamide S. As the proposed pivotal branching point in notoamide biosynthesis, notoamide S can be diverted to notoamide E through an oxidative pyran ring closure putatively catalyzed by either notH' cytochrome P450 monooxygenase or the notD' FAD-linked oxidoreductase. This step would be followed by an indole 2,3-epoxidation-initiated pinacol-like rearrangement catalyzed by the notB' FAD-dependent monooxygenase leading to the formation of notoamide C and notoamide D. On the other hand notoamide S is converted to notoamide T by notH' (or notD'), a bifunctional oxidase that also functions as the intramolecular Diels-Alderase responsible for generation of (-)-notoamide T. To generate antipodal (+)-notoaminide T, notH (or notD) in Aspergillus strain MF297-2 is expected to catalyze a Diels-Alder reaction leading to the opposite stereochemistry. The remaining oxidoreductase notD' (or notH') likely catalyzes the oxidative pyran ring formation to yield (-)-stephacidin A. The FAD-dependent monooxygenase notI' is highly similar to notB' and is predicted to catalyze a similar conversion from (-)-stephacidin A to (+)-notoamide B via the 2,3-epoxidation of (-)-stephacidin A followed by a pinacol-type rearrangement. Finally, it remains unclear which enzyme could be responsible for the final hydroxylation steps leading to notoamide A and sclerotiamide. This Aspergillus versicolor protein is 6-Hydroxy-7-prenyldeoxybrevianamide E synthase notC'.